The primary structure comprises 478 residues: Glycogen synthase (478 aa).

An ADP-alpha-D-glucose-binding site is contributed by lysine 15.

Belongs to the glycosyltransferase 1 family. Bacterial/plant glycogen synthase subfamily.

It catalyses the reaction [(1-&gt;4)-alpha-D-glucosyl](n) + ADP-alpha-D-glucose = [(1-&gt;4)-alpha-D-glucosyl](n+1) + ADP + H(+). It functions in the pathway glycan biosynthesis; glycogen biosynthesis. Functionally, synthesizes alpha-1,4-glucan chains using ADP-glucose. In Bacillus cytotoxicus (strain DSM 22905 / CIP 110041 / 391-98 / NVH 391-98), this protein is Glycogen synthase.